Here is a 369-residue protein sequence, read N- to C-terminus: Histone deacetylase 8 (369 aa).

The histone deacetylase stretch occupies residues 5–316; sequence LLPVYIHSAE…WTYLTALIVG (312 aa). Asp93 is a substrate binding site. Residue His135 is the Proton acceptor of the active site. Gly143 contacts substrate. Positions 170, 172, and 259 each coordinate a divalent metal cation. Residue Tyr298 participates in substrate binding.

The protein belongs to the histone deacetylase family. HD type 1 subfamily. Requires a divalent metal cation as cofactor.

It localises to the nucleus. Its subcellular location is the chromosome. The protein localises to the cytoplasm. The enzyme catalyses N(6)-acetyl-L-lysyl-[histone] + H2O = L-lysyl-[histone] + acetate. It catalyses the reaction N(6)-acetyl-L-lysyl-[protein] + H2O = L-lysyl-[protein] + acetate. The catalysed reaction is N(6)-(2E)-butenoyl-L-lysyl-[protein] + H2O = (2E)-2-butenoate + L-lysyl-[protein]. Its activity is regulated as follows. Its activity is inhibited by trichostatin A (TSA) and butyrate, 2 well known histone deacetylase inhibitors. Histone deacetylase that catalyzes the deacetylation of lysine residues on the N-terminal part of the core histones (H2A, H2B, H3 and H4). Histone deacetylation gives a tag for epigenetic repression and plays an important role in transcriptional regulation, cell cycle progression and developmental events. Histone deacetylases act via the formation of large multiprotein complexes. Also involved in the deacetylation of non-histone proteins. In addition to protein deacetylase activity, also has protein-lysine deacylase activity: acts as a protein decrotonylase by mediating decrotonylation ((2E)-butenoyl) of histones. This Xenopus tropicalis (Western clawed frog) protein is Histone deacetylase 8 (hdac8).